The primary structure comprises 476 residues: Bifunctional protein HldE (476 aa).

The tract at residues 1–318 (MKVTLPDFRR…ENAIRGRAET (318 aa)) is ribokinase. ATP is bound at residue 195-198 (NLSE). D264 is an active-site residue. The segment at 344-476 (MTNGIFDILH…IIQSIKNGRG (133 aa)) is cytidylyltransferase.

In the N-terminal section; belongs to the carbohydrate kinase PfkB family. It in the C-terminal section; belongs to the cytidylyltransferase family. In terms of assembly, homodimer.

It carries out the reaction D-glycero-beta-D-manno-heptose 7-phosphate + ATP = D-glycero-beta-D-manno-heptose 1,7-bisphosphate + ADP + H(+). The enzyme catalyses D-glycero-beta-D-manno-heptose 1-phosphate + ATP + H(+) = ADP-D-glycero-beta-D-manno-heptose + diphosphate. It functions in the pathway nucleotide-sugar biosynthesis; ADP-L-glycero-beta-D-manno-heptose biosynthesis; ADP-L-glycero-beta-D-manno-heptose from D-glycero-beta-D-manno-heptose 7-phosphate: step 1/4. The protein operates within nucleotide-sugar biosynthesis; ADP-L-glycero-beta-D-manno-heptose biosynthesis; ADP-L-glycero-beta-D-manno-heptose from D-glycero-beta-D-manno-heptose 7-phosphate: step 3/4. Functionally, catalyzes the phosphorylation of D-glycero-D-manno-heptose 7-phosphate at the C-1 position to selectively form D-glycero-beta-D-manno-heptose-1,7-bisphosphate. In terms of biological role, catalyzes the ADP transfer from ATP to D-glycero-beta-D-manno-heptose 1-phosphate, yielding ADP-D-glycero-beta-D-manno-heptose. The chain is Bifunctional protein HldE from Yersinia pestis bv. Antiqua (strain Antiqua).